A 289-amino-acid chain; its full sequence is 26S proteasome non-ATPase regulatory subunit 8 (289 aa).

The residue at position 45 (Ser-45) is a Phosphoserine. One can recognise a PCI domain in the interval 101 to 270; it reads PSFERYMAQL…QQKPEDTTIP (170 aa). Residue Lys-236 forms a Glycyl lysine isopeptide (Lys-Gly) (interchain with G-Cter in SUMO2) linkage.

This sequence belongs to the proteasome subunit S14 family. Component of the 19S proteasome regulatory particle complex. The 26S proteasome consists of a 20S core particle (CP) and two 19S regulatory subunits (RP). The regulatory particle is made of a lid composed of 9 subunits including PSMD8, a base containing 6 ATPases and few additional components. Interacts with DDI2. Interacts with TASOR.

Its function is as follows. Component of the 26S proteasome, a multiprotein complex involved in the ATP-dependent degradation of ubiquitinated proteins. This complex plays a key role in the maintenance of protein homeostasis by removing misfolded or damaged proteins, which could impair cellular functions, and by removing proteins whose functions are no longer required. Therefore, the proteasome participates in numerous cellular processes, including cell cycle progression, apoptosis, or DNA damage repair. The polypeptide is 26S proteasome non-ATPase regulatory subunit 8 (PSMD8) (Pongo abelii (Sumatran orangutan)).